The following is a 341-amino-acid chain: Pyrophosphate--fructose 6-phosphate 1-phosphotransferase (341 aa).

Gly-10 provides a ligand contact to diphosphate. Position 103 (Glu-103) interacts with Mg(2+). Substrate contacts are provided by residues 125 to 127 (TID), Arg-162, 169 to 171 (MGR), Glu-221, Arg-265, and 271 to 274 (HVQR). Residue Asp-127 is the Proton acceptor of the active site.

The protein belongs to the phosphofructokinase type A (PFKA) family. Mixed-substrate PFK group III subfamily. Homodimer or homotetramer. The cofactor is Mg(2+).

It localises to the cytoplasm. It carries out the reaction beta-D-fructose 6-phosphate + diphosphate = beta-D-fructose 1,6-bisphosphate + phosphate + H(+). It participates in carbohydrate degradation; glycolysis; D-glyceraldehyde 3-phosphate and glycerone phosphate from D-glucose: step 3/4. Non-allosteric. In terms of biological role, catalyzes the phosphorylation of D-fructose 6-phosphate, the first committing step of glycolysis. Uses inorganic phosphate (PPi) as phosphoryl donor instead of ATP like common ATP-dependent phosphofructokinases (ATP-PFKs), which renders the reaction reversible, and can thus function both in glycolysis and gluconeogenesis. Consistently, PPi-PFK can replace the enzymes of both the forward (ATP-PFK) and reverse (fructose-bisphosphatase (FBPase)) reactions. The sequence is that of Pyrophosphate--fructose 6-phosphate 1-phosphotransferase from Amycolatopsis mediterranei (strain S699) (Nocardia mediterranei).